Reading from the N-terminus, the 260-residue chain is MTSLKLLKEKAPLVICITNDVVKNFTANGLVALGASPAMSEFPADLEDLLKYAGGLLINIGTLTDENWKLYQAALKIAEKYNVPAVLDPVACGAGEYRKKVADDLINNYKLAAIRGNAGEIASLVGIDVASKGVDSAGVDNIDEIALAANEKFNIPIVVTGEVDAIAVNGEVVTIHNGSAMMPKVIGTGCLLGAVIASFIGLEKGQELKSLETAMLVYNIAGEMAEKRPNGHLPGTFKVEFINALYEITDEDVKEFKRVK.

M39 is a binding site for substrate. ATP-binding residues include R115 and T160. A substrate-binding site is contributed by G187.

The protein belongs to the Thz kinase family. Mg(2+) is required as a cofactor.

The catalysed reaction is 5-(2-hydroxyethyl)-4-methylthiazole + ATP = 4-methyl-5-(2-phosphooxyethyl)-thiazole + ADP + H(+). The protein operates within cofactor biosynthesis; thiamine diphosphate biosynthesis; 4-methyl-5-(2-phosphoethyl)-thiazole from 5-(2-hydroxyethyl)-4-methylthiazole: step 1/1. Its function is as follows. Catalyzes the phosphorylation of the hydroxyl group of 4-methyl-5-beta-hydroxyethylthiazole (THZ). In Streptococcus pneumoniae (strain 70585), this protein is Hydroxyethylthiazole kinase 1.